Consider the following 331-residue polypeptide: UDP-GalNAc:beta-1,3-N-acetylgalactosaminyltransferase 1 (331 aa).

The Cytoplasmic portion of the chain corresponds to M1–W20. A helical; Signal-anchor for type II membrane protein transmembrane segment spans residues S21–V43. Over I44–Y331 the chain is Lumenal. Residues N72, N154, N198, N212, and N326 are each glycosylated (N-linked (GlcNAc...) asparagine).

This sequence belongs to the glycosyltransferase 31 family. Mg(2+) is required as a cofactor. In terms of tissue distribution, detected in brain, ovary, kidney, uterus and stomach. In ovary, specifically expressed in follicular granulosa cells and shows particularly strong expression at later stages of follicle development.

It is found in the golgi apparatus membrane. The catalysed reaction is a globoside Gb3Cer (d18:1(4E)) + UDP-N-acetyl-alpha-D-galactosamine = a globoside Gb4Cer (d18:1(4E)) + UDP + H(+). Its pathway is protein modification; protein glycosylation. Transfers N-acetylgalactosamine onto globotriaosylceramide. Plays a critical role in preimplantation stage embryonic development. The chain is UDP-GalNAc:beta-1,3-N-acetylgalactosaminyltransferase 1 from Mus musculus (Mouse).